A 796-amino-acid polypeptide reads, in one-letter code: Lon protease 2 (796 aa).

Residues 9-206 enclose the Lon N-terminal domain; it reads LPIVILKENV…KLIVNLSIEI (198 aa). Residue 352–359 coordinates ATP; the sequence is GPPGIGKT. Residues 617-796 form the Lon proteolytic domain; sequence IDSSGFVYGL…EEVFDYLNII (180 aa). Active-site residues include serine 702 and lysine 745.

Belongs to the peptidase S16 family. In terms of assembly, homohexamer. Organized in a ring with a central cavity.

The protein localises to the cytoplasm. The catalysed reaction is Hydrolysis of proteins in presence of ATP.. Functionally, ATP-dependent serine protease that mediates the selective degradation of mutant and abnormal proteins as well as certain short-lived regulatory proteins. Required for cellular homeostasis and for survival from DNA damage and developmental changes induced by stress. Degrades polypeptides processively to yield small peptide fragments that are 5 to 10 amino acids long. Binds to DNA in a double-stranded, site-specific manner. The chain is Lon protease 2 (lon2) from Borreliella burgdorferi (strain ATCC 35210 / DSM 4680 / CIP 102532 / B31) (Borrelia burgdorferi).